Reading from the N-terminus, the 421-residue chain is Hydrolyase poxO (421 aa).

Serine 239 functions as the Nucleophile in the catalytic mechanism.

The protein belongs to the AB hydrolase superfamily. FUS2 hydrolase family. As to quaternary structure, homodimer.

It participates in secondary metabolite biosynthesis. Hydrolyase; part of the gene cluster that mediates the biosynthesis of oxaleimides, cytotoxic compounds containing an unusual disubstituted succinimide moiety. The first step of the pathway is provided by the HR-PKS poxF that serves in a new mode of collaborative biosynthesis with the PKS-NRPS poxE, by providing the olefin containing amino acid substrate via the synthesis of an ACP-bound dec-4-enoate. The cytochrome P450 monooxygenase poxM-catalyzed oxidation at the alpha-position creates the enzyme-bound 2-hydroxydec-4-enoyl-ACP thioester, which may be prone to spontaneous hydrolysis to yield 2-hydroxydec-4-enoic acid due to increased electrophilicity of the carbonyl. 2-hydroxydec-4-enoic acid can then be further oxidized by poxM to yield the alpha-ketoacid 2-oxodec-4-enoicacid, which is reductively aminated by the aminotransferase poxL to yield (S,E)-2-aminodec-4-enoic acid. The Hybrid PKS-NRPS synthetase poxE then performs condensation between the octaketide product of its PKS modules and the amino group of (S,E)-2-aminodec-4-enoic acid which is activated and incorporated by the adenylation domain. The resulting aminoacyl product can be cyclized by the Diels-Alderase PoxQ and reductively released by the reductive (R) domain of poxE to yield an aldehyde intermediate. The released aldehyde is then substrate for a Knoevenagel condensation by the hydrolyase poxO followed by an oxidation at the 5-position of the pyrrolidone ring. The presence of the olefin from the amino acid building block allows for migration of the substituted allyl group to occur. This allylic transposition reaction takes place in a conjugate addition, semipinacol-like fashion to yield a succinimide intermediate. Iterative two-electron oxidations of the C7 methyl of the succinimide intermediate to the carboxylic acid can be catalyzed by one of two remaining cytochrome P450 monooxygenasess poxC or poxD to yield oxaleimide A. Subsequent oxidation yields the maleimide scaffold oxaleimide I. Both oxaleimide A and oxaleimide I can undergo oxidative modifications in the decalin ring to yield the series of products oxaleimides B to H. In Penicillium oxalicum, this protein is Hydrolyase poxO.